The sequence spans 88 residues: Translation initiation factor IF-1 1 (88 aa).

The 72-residue stretch at 1–72 folds into the S1-like domain; sequence MSKEDMIELE…TKGRINFRHP (72 aa). The disordered stretch occupies residues 66 to 88; sequence RINFRHPTANPGAGPRPSHHHRR.

The protein belongs to the IF-1 family. Component of the 30S ribosomal translation pre-initiation complex which assembles on the 30S ribosome in the order IF-2 and IF-3, IF-1 and N-formylmethionyl-tRNA(fMet); mRNA recruitment can occur at any time during PIC assembly.

It localises to the cytoplasm. Functionally, one of the essential components for the initiation of protein synthesis. Stabilizes the binding of IF-2 and IF-3 on the 30S subunit to which N-formylmethionyl-tRNA(fMet) subsequently binds. Helps modulate mRNA selection, yielding the 30S pre-initiation complex (PIC). Upon addition of the 50S ribosomal subunit IF-1, IF-2 and IF-3 are released leaving the mature 70S translation initiation complex. The sequence is that of Translation initiation factor IF-1 1 from Chromobacterium violaceum (strain ATCC 12472 / DSM 30191 / JCM 1249 / CCUG 213 / NBRC 12614 / NCIMB 9131 / NCTC 9757 / MK).